Here is a 433-residue protein sequence, read N- to C-terminus: uncharacterized protein (433 aa).

This sequence belongs to the mimivirus R160 family.

It is found in the virion. This is an uncharacterized protein from Acanthamoeba polyphaga mimivirus (APMV).